A 190-amino-acid polypeptide reads, in one-letter code: Putative glutathione-dependent formaldehyde-activating enzyme (190 aa).

The 147-residue stretch at 19 to 165 folds into the CENP-V/GFA domain; sequence FKGGKLYCHC…FRKVGLQPYD (147 aa). 7 residues coordinate Zn(2+): C26, C28, C47, C49, C52, C94, and C97.

It belongs to the Gfa family. Zn(2+) is required as a cofactor.

It carries out the reaction S-(hydroxymethyl)glutathione = glutathione + formaldehyde. It participates in one-carbon metabolism; formaldehyde degradation; formate from formaldehyde (glutathione route): step 1/3. Catalyzes the condensation of formaldehyde and glutathione to S-hydroxymethylglutathione. This Pyrenophora teres f. teres (strain 0-1) (Barley net blotch fungus) protein is Putative glutathione-dependent formaldehyde-activating enzyme.